A 1024-amino-acid polypeptide reads, in one-letter code: SAC3 family protein 1 (1024 aa).

The segment at 1–62 is disordered; that stretch reads MEKRNETGNN…QDSRQKRFSS (62 aa). The span at 11–21 shows a compositional bias: basic residues; sequence RLKRSNNRGKS. The segment covering 22–38 has biased composition (basic and acidic residues); that stretch reads KKDWKDASVETTPRETS. Over residues 39-52 the composition is skewed to acidic residues; sequence VDEDNTSVFEDVEA. A PCI domain is found at 243 to 433; the sequence is EVEQLRKGIL…NKTAFFNDSK (191 aa). Ser841 carries the phosphoserine modification. A coiled-coil region spans residues 945 to 1022; that stretch reads AQLEELEVVR…ARDLLKKVET (78 aa).

It belongs to the SAC3 family.

It is found in the cytoplasm. Its subcellular location is the nucleus envelope. The polypeptide is SAC3 family protein 1 (Schizosaccharomyces pombe (strain 972 / ATCC 24843) (Fission yeast)).